Consider the following 298-residue polypeptide: Zinc import ATP-binding protein ZnuC (298 aa).

One can recognise an ABC transporter domain in the interval 17 to 232 (IELRNAGVYR…PEYVRLFGSR (216 aa)). 49-56 (GQNGAGKS) is an ATP binding site. The disordered stretch occupies residues 273–298 (RGHCHVEDGHHHDHEHHHHEGGQPRA). The span at 276–298 (CHVEDGHHHDHEHHHHEGGQPRA) shows a compositional bias: basic and acidic residues.

It belongs to the ABC transporter superfamily. Zinc importer (TC 3.A.1.15.5) family. The complex is composed of two ATP-binding proteins (ZnuC), two transmembrane proteins (ZnuB) and a solute-binding protein (ZnuA).

The protein resides in the cell inner membrane. It carries out the reaction Zn(2+)(out) + ATP(in) + H2O(in) = Zn(2+)(in) + ADP(in) + phosphate(in) + H(+)(in). Functionally, part of the ABC transporter complex ZnuABC involved in zinc import. Responsible for energy coupling to the transport system. The polypeptide is Zinc import ATP-binding protein ZnuC (Brucella melitensis biotype 1 (strain ATCC 23456 / CCUG 17765 / NCTC 10094 / 16M)).